The following is an 81-amino-acid chain: Large ribosomal subunit protein bL27 (81 aa).

Residues 1–11 show a composition bias toward polar residues; the sequence is MATSKSGGSSK. The interval 1 to 23 is disordered; sequence MATSKSGGSSKNGRDSISKRLGV.

This sequence belongs to the bacterial ribosomal protein bL27 family.

This is Large ribosomal subunit protein bL27 from Borrelia garinii subsp. bavariensis (strain ATCC BAA-2496 / DSM 23469 / PBi) (Borreliella bavariensis).